The primary structure comprises 139 residues: Transthyretin-like protein 5 (139 aa).

Positions 1 to 15 are cleaved as a signal peptide; sequence MKLIILLCLVASSYA.

The protein belongs to the nematode transthyretin-like family.

It localises to the secreted. In Caenorhabditis elegans, this protein is Transthyretin-like protein 5 (ttr-5).